Reading from the N-terminus, the 403-residue chain is Large ribosomal subunit protein uL3 (403 aa).

The disordered stretch occupies residues 1 to 37 (MSHRKFSAPRHGSLGFLPRKRSSRHRGKVKSFPKDDP). Ser-13 is subject to Phosphoserine. Residues 18-31 (PRKRSSRHRGKVKS) show a composition bias toward basic residues. Residue Lys-39 forms a Glycyl lysine isopeptide (Lys-Gly) (interchain with G-Cter in SUMO2) linkage. Lys-136 carries the post-translational modification N6-acetyllysine. Glycyl lysine isopeptide (Lys-Gly) (interchain with G-Cter in SUMO2) cross-links involve residues Lys-224 and Lys-226. A Tele-methylhistidine modification is found at His-245. Residues Lys-286 and Lys-294 each carry the N6-acetyllysine; alternate modification. Residue Lys-286 forms a Glycyl lysine isopeptide (Lys-Gly) (interchain with G-Cter in SUMO2); alternate linkage. Lys-294 is covalently cross-linked (Glycyl lysine isopeptide (Lys-Gly) (interchain with G-Cter in SUMO1); alternate). At Ser-304 the chain carries Phosphoserine. The residue at position 366 (Lys-366) is an N6-acetyllysine; alternate. A Glycyl lysine isopeptide (Lys-Gly) (interchain with G-Cter in SUMO2); alternate cross-link involves residue Lys-366. Residue Lys-373 is modified to N6-acetyllysine. Residues Lys-386, Lys-393, and Lys-399 each participate in a glycyl lysine isopeptide (Lys-Gly) (interchain with G-Cter in SUMO2) cross-link.

This sequence belongs to the universal ribosomal protein uL3 family. In terms of assembly, component of the large ribosomal subunit. Interacts with DHX33. Post-translationally, constitutively monomethylated at His-245 by METTL18. Methylation at His-245 regulates translation elongation by slowing ribosome traversal on tyrosine codons: slower elongation provides enough time for proper folding of synthesized proteins and prevents cellular aggregation of tyrosine-rich proteins. It is not required for incorporation of RPL3 into ribosomes.

The protein localises to the nucleus. The protein resides in the nucleolus. It localises to the cytoplasm. Functionally, component of the large ribosomal subunit. The ribosome is a large ribonucleoprotein complex responsible for the synthesis of proteins in the cell. The protein is Large ribosomal subunit protein uL3 (RPL3) of Oryctolagus cuniculus (Rabbit).